The chain runs to 493 residues: Guanosine-5'-triphosphate,3'-diphosphate pyrophosphatase (493 aa).

The protein belongs to the GppA/Ppx family. GppA subfamily.

It catalyses the reaction guanosine 3'-diphosphate 5'-triphosphate + H2O = guanosine 3',5'-bis(diphosphate) + phosphate + H(+). It functions in the pathway purine metabolism; ppGpp biosynthesis; ppGpp from GTP: step 2/2. Functionally, catalyzes the conversion of pppGpp to ppGpp. Guanosine pentaphosphate (pppGpp) is a cytoplasmic signaling molecule which together with ppGpp controls the 'stringent response', an adaptive process that allows bacteria to respond to amino acid starvation, resulting in the coordinated regulation of numerous cellular activities. The polypeptide is Guanosine-5'-triphosphate,3'-diphosphate pyrophosphatase (Salmonella paratyphi B (strain ATCC BAA-1250 / SPB7)).